We begin with the raw amino-acid sequence, 108 residues long: LBH domain-containing protein 2 (108 aa).

The span at 1 to 11 (MSTPRPAPPQP) shows a compositional bias: pro residues. Residues 1-108 (MSTPRPAPPQ…SEDPAAPARG (108 aa)) form a disordered region. In terms of domain architecture, LBH spans 37–62 (QRLPSIVVEPSEADPVESGELRWPLE). Residues 63-85 (SAQRGPSQSRAAAAPSPSLPGEP) show a composition bias toward low complexity.

The chain is LBH domain-containing protein 2 from Homo sapiens (Human).